The chain runs to 198 residues: Glycerol-3-phosphate acyltransferase (198 aa).

Transmembrane regions (helical) follow at residues 1–21 (MNLL…GYLA), 55–75 (VFLL…YLLL), 79–99 (WQVA…WLNW), 111–131 (IFLG…IIMI), 136–156 (IVSL…FLSF), and 158–178 (GSNL…LVIW).

This sequence belongs to the PlsY family. As to quaternary structure, probably interacts with PlsX.

It localises to the cell inner membrane. The catalysed reaction is an acyl phosphate + sn-glycerol 3-phosphate = a 1-acyl-sn-glycero-3-phosphate + phosphate. Its pathway is lipid metabolism; phospholipid metabolism. Catalyzes the transfer of an acyl group from acyl-phosphate (acyl-PO(4)) to glycerol-3-phosphate (G3P) to form lysophosphatidic acid (LPA). This enzyme utilizes acyl-phosphate as fatty acyl donor, but not acyl-CoA or acyl-ACP. In Prochlorococcus marinus (strain NATL2A), this protein is Glycerol-3-phosphate acyltransferase.